Consider the following 367-residue polypeptide: Regulatory protein E2 (367 aa).

The interval 1–201 (MMETLSQRLS…QVIVCPESVF (201 aa)) is transactivation domain. The tract at residues 287 to 367 (TTPIVHLKGD…VTVSKGYMSI (81 aa)) is DNA-binding domain. A Glycyl lysine isopeptide (Lys-Gly) (interchain with G-Cter in SUMO) cross-link involves residue K294.

The protein belongs to the papillomaviridae E2 protein family. Binds DNA as homodimer. Interacts with protein E1; this interaction greatly increases E1 DNA-binding activity. Interacts with protein L1; this interaction enhances E2-dependent replication and transcription activation. Interacts with protein L2; this interaction inhibits E2 transcriptional activity but not DNA replication function E2. Interacts with protein E7; this interaction inhibits E7 oncogenic activity. Interacts with host TAF1; this interaction modulates E2-dependent transcriptional regulation. Interacts with host BRD4; this interaction mediates E2 transcriptional activation function. Additionally, the interaction with host BRD4 on mitotic chromosomes mediates tethering of the viral genome. Interacts with host TOPBP1; this interaction is required for optimal viral DNA replication. In terms of processing, phosphorylated. Sumoylation plays a regulatory role in E2 transcriptional activity.

The protein resides in the host nucleus. In terms of biological role, plays a role in the initiation of viral DNA replication. A dimer of E2 interacts with a dimer of E1 in order to improve specificity of E1 DNA binding activity. Once the complex recognizes and binds DNA at specific sites, the E2 dimer is removed from DNA. E2 also regulates viral transcription through binding to the E2RE response element (5'-ACCNNNNNNGGT-3') present in multiple copies in the regulatory regions of the viral genome. Activates or represses transcription depending on E2RE's position with regards to proximal promoter elements including the TATA-box. Repression occurs by sterically hindering the assembly of the transcription initiation complex. This chain is Regulatory protein E2, found in Homo sapiens (Human).